A 357-amino-acid polypeptide reads, in one-letter code: UDP-N-acetylglucosamine--N-acetylmuramyl-(pentapeptide) pyrophosphoryl-undecaprenol N-acetylglucosamine transferase (357 aa).

Residues 15-17 (TGG), asparagine 124, arginine 165, serine 191, and glutamine 285 each bind UDP-N-acetyl-alpha-D-glucosamine.

It belongs to the glycosyltransferase 28 family. MurG subfamily.

The protein resides in the cell inner membrane. It catalyses the reaction di-trans,octa-cis-undecaprenyl diphospho-N-acetyl-alpha-D-muramoyl-L-alanyl-D-glutamyl-meso-2,6-diaminopimeloyl-D-alanyl-D-alanine + UDP-N-acetyl-alpha-D-glucosamine = di-trans,octa-cis-undecaprenyl diphospho-[N-acetyl-alpha-D-glucosaminyl-(1-&gt;4)]-N-acetyl-alpha-D-muramoyl-L-alanyl-D-glutamyl-meso-2,6-diaminopimeloyl-D-alanyl-D-alanine + UDP + H(+). The protein operates within cell wall biogenesis; peptidoglycan biosynthesis. Cell wall formation. Catalyzes the transfer of a GlcNAc subunit on undecaprenyl-pyrophosphoryl-MurNAc-pentapeptide (lipid intermediate I) to form undecaprenyl-pyrophosphoryl-MurNAc-(pentapeptide)GlcNAc (lipid intermediate II). The protein is UDP-N-acetylglucosamine--N-acetylmuramyl-(pentapeptide) pyrophosphoryl-undecaprenol N-acetylglucosamine transferase of Microcystis aeruginosa (strain NIES-843 / IAM M-2473).